The following is a 213-amino-acid chain: Superoxide dismutase [Fe] (213 aa).

Fe cation is bound by residues His-28, His-82, Asp-164, and His-168.

Belongs to the iron/manganese superoxide dismutase family. In terms of assembly, homotetramer. Fe cation serves as cofactor.

The catalysed reaction is 2 superoxide + 2 H(+) = H2O2 + O2. In terms of biological role, destroys superoxide anion radicals which are normally produced within the cells and which are toxic to biological systems. In Aquifex pyrophilus, this protein is Superoxide dismutase [Fe] (sodB).